Reading from the N-terminus, the 584-residue chain is Chaperonin GroEL 1 (584 aa).

ATP is bound by residues 29–32 (TIGP), 86–90 (DGTTT), Gly413, and Asp492. A disordered region spans residues 523-542 (EPEAAAPGGPGGDPMGGMGG). The span at 530-542 (GGPGGDPMGGMGG) shows a compositional bias: gly residues.

Belongs to the chaperonin (HSP60) family. In terms of assembly, forms a cylinder of 14 subunits composed of two heptameric rings stacked back-to-back. Interacts with the co-chaperonin GroES.

It is found in the cytoplasm. It carries out the reaction ATP + H2O + a folded polypeptide = ADP + phosphate + an unfolded polypeptide.. In terms of biological role, together with its co-chaperonin GroES, plays an essential role in assisting protein folding. The GroEL-GroES system forms a nano-cage that allows encapsulation of the non-native substrate proteins and provides a physical environment optimized to promote and accelerate protein folding. This is Chaperonin GroEL 1 from Prochlorococcus marinus (strain MIT 9312).